The sequence spans 106 residues: UPF0642 protein YBL028C (106 aa).

The segment covering 1 to 12 (MAKSLRASSHLN) has biased composition (polar residues). Disordered stretches follow at residues 1–21 (MAKS…RRGV) and 52–106 (KEEQ…FTRF). Basic and acidic residues predominate over residues 62–72 (DEKKSNEEAPR). The segment covering 83–106 (GRHHTYKKAKLMKQSKKKTSFTRF) has biased composition (basic residues).

This sequence belongs to the UPF0642 family.

The protein is UPF0642 protein YBL028C of Saccharomyces cerevisiae (strain ATCC 204508 / S288c) (Baker's yeast).